A 228-amino-acid polypeptide reads, in one-letter code: Ribonuclease S-1 (228 aa).

The first 27 residues, 1–27, serve as a signal peptide directing secretion; that stretch reads MGVTGMTYMFTMVFSLIVLILSSSTVG. Position 36 (Gln-36) interacts with RNA. Cys-42 and Cys-49 are oxidised to a cystine. An RNA-binding site is contributed by His-60. His-60 functions as the Proton donor in the catalytic mechanism. An intrachain disulfide couples Cys-75 to Cys-119. Asn-87 carries an N-linked (GlcNAc...) asparagine glycan. An RNA-binding site is contributed by 98-99; it reads NV. Residue Asn-101 is glycosylated (N-linked (GlcNAc...) asparagine). Residues Phe-108, 111–112, and 115–116 contribute to the RNA site; these read KE and KH. The active site involves Glu-112. Residue His-116 is the Proton acceptor of the active site. N-linked (GlcNAc...) asparagine glycosylation is found at Asn-144, Asn-157, and Asn-175. Cystine bridges form between Cys-183–Cys-222 and Cys-199–Cys-210.

It belongs to the RNase T2 family. In terms of processing, N-linked core structure at Asn-87 and Asn-101 contains xylose and fucose or consists of disaccharide (GlcNAc-GlcNAc). N-linked core structure at Asn-144 contains xylose.

The catalysed reaction is a ribonucleotidyl-ribonucleotide-RNA + H2O = a 3'-end 3'-phospho-ribonucleotide-RNA + a 5'-end dephospho-ribonucleoside-RNA + H(+). In terms of biological role, self-incompatibility (SI) is the inherited ability of a flowering plant to prevent self-fertilization by discriminating between self and non-self pollen during pollination. In many species, self-incompatibility is controlled by the single, multiallelic locus S. This is Ribonuclease S-1 from Pyrus pyrifolia (Chinese pear).